The primary structure comprises 561 residues: MLPEQQQHLISLLARAVAGILPEASPDILLERPKVAAHGDVATNVAMQLAKPAKRNPRELAQGIVDALLADPQARAIVDSAEIAGPGFINLRFTAQARQAVVAAVSAQGAAFGRAARRDEKVLVEFVSANPTGPLHVGHARQAALGDAICRLFDASGWDVTREFYYNDAGNQIQNLAISVQARARGIGPDAPEWPADGYKGDYIADIARDYLAQASVQAADGEPVQASGNIDDLEDIRAFAVAYLRREQDLDLQAFGLKFDNFFLESSLYTSGRVERTVETLIAKGHTYEQDGALWLRTTELGTGDDKDRVMRKSEGGYTYFVPDVAYHLAKWERGFHHAINIQGSDHHGTVARVRAGLQGLEEGIPKEFPAYVLHKMVKVMRGGEEVKISKRAGSYVTMRDLIEWVGRDAVRYFLIQRRADTEFVFDIDLALSKSDENPVYYIQYAHARICSMIASSGLDDATIAAADAARLTAPSEFALMQRLAEFPNVVKLAAQELAPHHIAFWLRDCASDFHGWYNAERVLVDDEGLKQARLRLAATTRQVLANGLALLGVTALERM.

Positions 129 to 139 match the 'HIGH' region motif; sequence ANPTGPLHVGH.

It belongs to the class-I aminoacyl-tRNA synthetase family. As to quaternary structure, monomer.

Its subcellular location is the cytoplasm. It carries out the reaction tRNA(Arg) + L-arginine + ATP = L-arginyl-tRNA(Arg) + AMP + diphosphate. The chain is Arginine--tRNA ligase from Bordetella avium (strain 197N).